The following is a 203-amino-acid chain: Ribosomal RNA small subunit methyltransferase G (203 aa).

S-adenosyl-L-methionine contacts are provided by residues G73, L78, 124 to 125 (VE), and R139.

Belongs to the methyltransferase superfamily. RNA methyltransferase RsmG family.

Its subcellular location is the cytoplasm. It carries out the reaction guanosine(527) in 16S rRNA + S-adenosyl-L-methionine = N(7)-methylguanosine(527) in 16S rRNA + S-adenosyl-L-homocysteine. In terms of biological role, specifically methylates the N7 position of guanine in position 527 of 16S rRNA. In Haemophilus influenzae (strain PittEE), this protein is Ribosomal RNA small subunit methyltransferase G.